The sequence spans 882 residues: Alanine--tRNA ligase (882 aa).

The Zn(2+) site is built by His-567, His-571, Cys-669, and His-673.

It belongs to the class-II aminoacyl-tRNA synthetase family. Zn(2+) is required as a cofactor.

The protein resides in the cytoplasm. It catalyses the reaction tRNA(Ala) + L-alanine + ATP = L-alanyl-tRNA(Ala) + AMP + diphosphate. In terms of biological role, catalyzes the attachment of alanine to tRNA(Ala) in a two-step reaction: alanine is first activated by ATP to form Ala-AMP and then transferred to the acceptor end of tRNA(Ala). Also edits incorrectly charged Ser-tRNA(Ala) and Gly-tRNA(Ala) via its editing domain. The protein is Alanine--tRNA ligase of Thermosynechococcus vestitus (strain NIES-2133 / IAM M-273 / BP-1).